We begin with the raw amino-acid sequence, 279 residues long: MGCGPSQQKEDQSQSRIPSPRKGWEEGSKADVRVTSSKENCSPQTEAAWPKHTIDNAKSLDQQAQIGSLPGTIPENSPTPSKTSRRINSDPVANGLTNKPQLPESWERPKSSDILEELIVQGIIQSRSKVFRNGESYDVMVDTTEKPLRKPPARLKKLKVKKEVKDFTIQDIEEKMQAAEERRKTKKEEIRKRLRSDRLLPTANPSDEAEPPGRVEVPFTKGLPAVNTPALEKSDVQEGEPLKRKKSESDVAQMNRNYSCTGLELVESDMYYNQEDNIF.

Disordered regions lie at residues 1-110 and 178-254; these read MGCG…ERPK and AAEE…VAQM. Glycine 2 carries the N-myristoyl glycine lipid modification. Over residues 22-32 the composition is skewed to basic and acidic residues; sequence KGWEEGSKADV. A compositionally biased stretch (polar residues) spans 34-45; the sequence is VTSSKENCSPQT. Residues 121–248 form the SLD domain; the sequence is QGIIQSRSKV…GEPLKRKKSE (128 aa). Composition is skewed to basic and acidic residues over residues 178-191 and 232-242; these read AAEE…EEIR and EKSDVQEGEPL.

This chain is Stathmin domain-containing protein 1 (Stmnd1), found in Mus musculus (Mouse).